The chain runs to 576 residues: S-layer protein (576 aa).

A signal peptide spans 1 to 23 (KKIGAIAAGSAMVASALATGVFA). N-linked (GlcNAc...) asparagine glycans are attached at residues N102 and N132.

Belongs to the Mj S-layer protein family. N-linked glycans consist of the 779 Da trisaccharide beta-ManNAc(Thr)-(1-4)-beta-GlcNAc3NAcA-(1-3)-beta-GlcNAc.

Its subcellular location is the secreted. It localises to the cell wall. It is found in the S-layer. S-layer protein. The S-layer is a paracrystalline mono-layered assembly of proteins which coat the surface of the cell. In Methanococcus voltae, this protein is S-layer protein (sla).